A 409-amino-acid polypeptide reads, in one-letter code: Isovaleryl-CoA dehydrogenase, mitochondrial (409 aa).

The transit peptide at 1-22 directs the protein to the mitochondrion; that stretch reads MQRFFSARSILGYAVKTRRRSF. Residues 151 to 160 and 184 to 186 each bind FAD; these read LAMSEPNAGS and WCT. Ser160 is a substrate binding site. Residues 206–207, Tyr261, and 268–271 each bind substrate; these read SK and DLER. The Proton acceptor role is filled by Glu270. FAD-binding positions include Arg296, Gln307, and 364–368; that span reads QCLGG. 391–392 is a substrate binding site; the sequence is AG. 393–395 serves as a coordination point for FAD; that stretch reads TSE.

It belongs to the acyl-CoA dehydrogenase family. In terms of assembly, homodimer. FAD serves as cofactor. In terms of tissue distribution, expressed in leaves, stems and flowers. Not detected in roots.

Its subcellular location is the mitochondrion. The catalysed reaction is 3-methylbutanoyl-CoA + oxidized [electron-transfer flavoprotein] + H(+) = 3-methylbut-2-enoyl-CoA + reduced [electron-transfer flavoprotein]. It functions in the pathway amino-acid degradation; L-leucine degradation; (S)-3-hydroxy-3-methylglutaryl-CoA from 3-isovaleryl-CoA: step 1/3. Functionally, involved in degradation of the branched-chain amino acids, phytol and lysine for the supply of carbon and electrons to the ETF/ETFQO complex during dark-induced sugar starvation. The polypeptide is Isovaleryl-CoA dehydrogenase, mitochondrial (IVD) (Arabidopsis thaliana (Mouse-ear cress)).